The chain runs to 393 residues: Putative B3 domain-containing protein Os06g0632500 (393 aa).

3 consecutive DNA-binding regions (TF-B3) follow at residues 27–123 (LSVP…FDPG), 141–238 (RPRF…FLQN), and 316–393 (NSFT…VQRR).

The protein localises to the nucleus. The protein is Putative B3 domain-containing protein Os06g0632500 of Oryza sativa subsp. japonica (Rice).